The primary structure comprises 232 residues: MAKLSKRAAAIAKKIDRTKLYPVSEALTLVKETATAKFDESIDVAVQLGIDPKKSDQLVRGSVVLPAGTGKSVRVAVFAQGDKAEAARAAGADIVGLDDLAERIKGGQIDFDVVIASPDTMRVVGALGQVLGPRGLMPNPKVGTVTPDVATAVKNAKAGQVQYRTDKAGIIHATIGRASFGVEQLQTNLAALVDALQKARPAAAKGIYLRKLAVSSTMGGGARIEVASLSAN.

It belongs to the universal ribosomal protein uL1 family. Part of the 50S ribosomal subunit.

In terms of biological role, binds directly to 23S rRNA. The L1 stalk is quite mobile in the ribosome, and is involved in E site tRNA release. Protein L1 is also a translational repressor protein, it controls the translation of the L11 operon by binding to its mRNA. This chain is Large ribosomal subunit protein uL1, found in Bordetella petrii (strain ATCC BAA-461 / DSM 12804 / CCUG 43448).